Reading from the N-terminus, the 637-residue chain is Transcription factor PHYTOCHROME INTERACTING FACTOR-LIKE 15 (637 aa).

Gly residues predominate over residues 35–46 (FFGGTGGGGGGS). Disordered regions lie at residues 35 to 54 (FFGG…QERQ), 146 to 213 (ASLP…EGVM), and 356 to 397 (ECSA…RRRR). Residues 149-170 (PASNHNGATNNRNAPVATTTTR) show a composition bias toward polar residues. The tract at residues 384-397 (RTAEVHNLSERRRR) is basic motif. A compositionally biased stretch (basic and acidic residues) spans 384–397 (RTAEVHNLSERRRR). In terms of domain architecture, bHLH spans 384-433 (RTAEVHNLSERRRRDRINEKMRALQELIPNCNKIDKASMLDEAIEYLKTL). The tract at residues 398–433 (DRINEKMRALQELIPNCNKIDKASMLDEAIEYLKTL) is helix-loop-helix motif. Positions 601 to 637 (GDNENFRIPSSAQTKSSQFSDGTGKGTNARERDGAET) are disordered. Positions 608-621 (IPSSAQTKSSQFSD) are enriched in polar residues. A compositionally biased stretch (basic and acidic residues) spans 628-637 (NARERDGAET).

It belongs to the bHLH protein family. Interacts with LF and PRR1.

It is found in the nucleus. Transcription factor that may act as negative regulator of phyB-dependent light signal transduction. The sequence is that of Transcription factor PHYTOCHROME INTERACTING FACTOR-LIKE 15 from Oryza sativa subsp. japonica (Rice).